The sequence spans 42 residues: Delta-hexatoxin-Hv1a (42 aa).

Cystine bridges form between cysteine 1–cysteine 15, cysteine 8–cysteine 20, cysteine 14–cysteine 31, and cysteine 16–cysteine 42.

It belongs to the neurotoxin 06 (delta-actx) family. Expressed by the venom gland.

It localises to the secreted. Inhibits tetrodotoxin-sensitive voltage-gated sodium channels (Nav) by binding to site 3. Slows the inactivation, and causes a prolongation of action potential duration resulting in repetitive firing in autonomic and motor nerve fibers. Does not depolarize the resting potential. Does not affect tetrodotoxin-resistant sodium channels. This lethal neurotoxin is active on both insect and mammalian voltage-gated sodium channels. Pan-neuronal expression in Drosophila is lethal but flies engineered to express the toxin only in pacemaker neurons have profound defects in circadian rhythm but a normal lifespan. In Hadronyche versuta (Blue mountains funnel-web spider), this protein is Delta-hexatoxin-Hv1a.